A 284-amino-acid polypeptide reads, in one-letter code: L-ribulose-5-phosphate 3-epimerase UlaE (284 aa).

This sequence belongs to the L-ribulose-5-phosphate 3-epimerase family.

It carries out the reaction L-ribulose 5-phosphate = L-xylulose 5-phosphate. The protein operates within cofactor degradation; L-ascorbate degradation; D-xylulose 5-phosphate from L-ascorbate: step 3/4. Catalyzes the isomerization of L-xylulose-5-phosphate to L-ribulose-5-phosphate. Is involved in the anaerobic L-ascorbate utilization. The polypeptide is L-ribulose-5-phosphate 3-epimerase UlaE (Escherichia coli O139:H28 (strain E24377A / ETEC)).